Consider the following 656-residue polypeptide: MAATRYNSGDLRRQVGSPRAKNRDTKETLCRNVVIYGHCRWEDSGCTFNHDQNKASVSQTDLNSNRRVFNVESPSFTPANQQQSAGKKSTFSSQAASAAPFTPRGVGTSTPTLQQANDSTIFNPAAIREFTPQNYDVGNTISQNGAQHVTQDGGLYSDPFSISSLGQTMPPQGQYNPYANDPNNLAGAGAGLYQPAGFGNGLVHPPNYHLYQPPSELYRPSLQPYQRTTYDFFIPKDRRENLQKKLFHMQQLLPNSGLPNLDRWHSLFPLDTKATRNSTCFGYPSWMYKAQNNKNGRHFALRRIEGYRLTNEKAILNVTKEWKKIINANIVTVHEAFTTEFFGDSSLIFVYDFHPLSETLYDHHFPPNNSHNRLRNTNKIPENLLWSYVCQIANALLAIHNAKLAARCLELSKIIWENNRIRLAACSILDVLHHDSPNRKTIEELQQEDFVKFGRIILALATNTPTLNFNNIDAALATIVPRYSTQLRGVLEWLIKPSAPGETKTVETLLGGITTHLANFANFVMQESDEKEFHLMRELENGRIARLMFKLSVVNERGDSCGVHNWSETGERLLLKLFRDYVFHQVDADGKARLDTNHYLNCLSKLDASSEEQILLTSRDNATVFVVSYRSIRQMLDRAYGELGKESKPSATGATI.

Disordered stretches follow at residues 1 to 24 (MAAT…KNRD) and 75 to 117 (SFTP…QQAN). A C3H1-type zinc finger spans residues 24–53 (DTKETLCRNVVIYGHCRWEDSGCTFNHDQN). The short motif at 63-83 (NSNRRVFNVESPSFTPANQQQ) is the PABPC-interacting motif-2 (PAM-2) element. 2 stretches are compositionally biased toward polar residues: residues 75 to 96 (SFTP…SQAA) and 107 to 117 (GTSTPTLQQAN). Positions 251–514 (QLLPNSGLPN…TVETLLGGIT (264 aa)) are pseudokinase domain. ATP-binding positions include 275–280 (TRNSTC), Arg-302, 352–359 (DFHPLSET), and 412–413 (SK). A coiled-coil region spans residues 515 to 553 (THLANFANFVMQESDEKEFHLMRELENGRIARLMFKLSV). A knob domain region spans residues 554 to 656 (VNERGDSCGV…SKPSATGATI (103 aa)).

Belongs to the protein kinase superfamily. PAN3 family. Homodimer. Forms a heterotrimer with a catalytic subunit par-1/pan2 to form the poly(A)-nuclease (PAN) deadenylation complex. Interacts (via PAM-2 motif) with poly(A)-binding protein pabp-1 (via PABC domain), conferring substrate specificity of the enzyme complex.

It is found in the cytoplasm. Its function is as follows. Regulatory subunit of the poly(A)-nuclease (PAN) deadenylation complex, one of two cytoplasmic mRNA deadenylases involved in mRNA turnover. PAN specifically shortens poly(A) tails of RNA and the activity is stimulated by poly(A)-binding protein pabp-1. PAN deadenylation is followed by rapid degradation of the shortened mRNA tails by the CCR4-NOT complex. Deadenylated mRNAs are then degraded by two alternative mechanisms, namely exosome-mediated 3'-5' exonucleolytic degradation, or deadenylation-dependent mRNA decaping and subsequent 5'-3' exonucleolytic degradation by rgb-30/xrn1. May also be involved in post-transcriptional maturation of mRNA poly(A) tails. par-2/pan3 acts as a positive regulator for PAN activity, recruiting the catalytic subunit par-1/pan2 to mRNA via its interaction with RNA and with pabp-1. This Neurospora crassa (strain ATCC 24698 / 74-OR23-1A / CBS 708.71 / DSM 1257 / FGSC 987) protein is PAN2-PAN3 deadenylation complex subunit pan3 (par-2).